A 123-amino-acid polypeptide reads, in one-letter code: Ribosome-binding factor A (123 aa).

Belongs to the RbfA family. As to quaternary structure, monomer. Binds 30S ribosomal subunits, but not 50S ribosomal subunits or 70S ribosomes.

The protein localises to the cytoplasm. Functionally, one of several proteins that assist in the late maturation steps of the functional core of the 30S ribosomal subunit. Associates with free 30S ribosomal subunits (but not with 30S subunits that are part of 70S ribosomes or polysomes). Required for efficient processing of 16S rRNA. May interact with the 5'-terminal helix region of 16S rRNA. The sequence is that of Ribosome-binding factor A from Cupriavidus taiwanensis (strain DSM 17343 / BCRC 17206 / CCUG 44338 / CIP 107171 / LMG 19424 / R1) (Ralstonia taiwanensis (strain LMG 19424)).